The sequence spans 309 residues: Tagatose-6-phosphate kinase (309 aa).

It belongs to the carbohydrate kinase PfkB family. LacC subfamily.

It catalyses the reaction D-tagatofuranose 6-phosphate + ATP = D-tagatofuranose 1,6-bisphosphate + ADP + H(+). It participates in carbohydrate metabolism; D-tagatose 6-phosphate degradation; D-glyceraldehyde 3-phosphate and glycerone phosphate from D-tagatose 6-phosphate: step 1/2. This chain is Tagatose-6-phosphate kinase, found in Streptococcus sanguinis (strain SK36).